A 563-amino-acid polypeptide reads, in one-letter code: Arginine--tRNA ligase (563 aa).

The short motif at 121–131 (PNIAKPFSIGH) is the 'HIGH' region element.

This sequence belongs to the class-I aminoacyl-tRNA synthetase family. As to quaternary structure, monomer.

It is found in the cytoplasm. The enzyme catalyses tRNA(Arg) + L-arginine + ATP = L-arginyl-tRNA(Arg) + AMP + diphosphate. This is Arginine--tRNA ligase from Streptococcus pyogenes serotype M49 (strain NZ131).